Reading from the N-terminus, the 361-residue chain is Ribosomal RNA large subunit methyltransferase M (361 aa).

S-adenosyl-L-methionine is bound by residues serine 187, cysteine 220 to glycine 223, aspartate 239, aspartate 259, and aspartate 276. The active-site Proton acceptor is lysine 305.

Belongs to the class I-like SAM-binding methyltransferase superfamily. RNA methyltransferase RlmE family. RlmM subfamily. As to quaternary structure, monomer.

The protein resides in the cytoplasm. The catalysed reaction is cytidine(2498) in 23S rRNA + S-adenosyl-L-methionine = 2'-O-methylcytidine(2498) in 23S rRNA + S-adenosyl-L-homocysteine + H(+). Catalyzes the 2'-O-methylation at nucleotide C2498 in 23S rRNA. This is Ribosomal RNA large subunit methyltransferase M from Shewanella sp. (strain MR-4).